A 287-amino-acid polypeptide reads, in one-letter code: Oxaloacetate decarboxylase (287 aa).

Serine 50 lines the substrate pocket. Aspartate 88 serves as a coordination point for Mg(2+). Residues arginine 159 and histidine 235 each coordinate substrate.

Belongs to the isocitrate lyase family. Oxaloacetate decarboxylase subfamily. As to quaternary structure, homotetramer; dimer of dimers. Mg(2+) is required as a cofactor.

The enzyme catalyses oxaloacetate + H(+) = pyruvate + CO2. Catalyzes the decarboxylation of oxaloacetate into pyruvate. Seems to play a role in maintaining cellular concentrations of bicarbonate and pyruvate. The sequence is that of Oxaloacetate decarboxylase from Pseudomonas aeruginosa (strain LESB58).